We begin with the raw amino-acid sequence, 2959 residues long: uncharacterized protein (2959 aa).

The protein resides in the virion. This is an uncharacterized protein from Acanthamoeba polyphaga mimivirus (APMV).